Here is a 263-residue protein sequence, read N- to C-terminus: Putative protein JayE (263 aa).

Belongs to the Mu gp47/PBSX XkdT family.

The sequence is that of Putative protein JayE (jayE) from Escherichia coli (strain K12).